Here is a 111-residue protein sequence, read N- to C-terminus: Cystatin (111 aa).

Residues 3 to 103 (GGLSPRDVTD…CRFEVWSRPW (101 aa)) enclose the Cystatin domain. A Secondary area of contact motif is present at residues 47–51 (QVVSG). Residues C65 and C81 are joined by a disulfide bond.

It belongs to the cystatin family. In terms of tissue distribution, expressed by the venom gland.

Its subcellular location is the secreted. Inhibits various C1 cysteine proteases including cathepsin L, papain and cathepsin B. This protein has no toxic activity and its function in the venom is unknown. It may play a role as housekeeping or regulatory protein. The polypeptide is Cystatin (Bitis arietans (African puff adder)).